The primary structure comprises 837 residues: Outer membrane usher protein HifC (837 aa).

Residues 1–26 form the signal peptide; sequence MKTKNFPLNKIAFACTLLLANPVAWA. A disulfide bridge connects residues Cys813 and Cys833.

It belongs to the fimbrial export usher family.

It localises to the cell outer membrane. In terms of biological role, essential for piliation. This is Outer membrane usher protein HifC (hifC) from Haemophilus influenzae.